Here is a 138-residue protein sequence, read N- to C-terminus: Gas vesicle protein A (138 aa).

The disordered stretch occupies residues 74–138; the sequence is EAGPRKDPGL…STSRKKEEQE (65 aa). Positions 116–129 are enriched in low complexity; that stretch reads GSSSGSSSGSSSRS.

The protein belongs to the gas vesicle GvpA family. As to quaternary structure, the gas vesicle shell is 2 nm thick and consists of a single layer of this protein. It forms helical ribs nearly perpendicular to the long axis of the vesicle.

The protein localises to the gas vesicle shell. In terms of biological role, gas vesicles are hollow, gas filled proteinaceous nanostructures found in some microorganisms. During planktonic growth they allow positioning of the organism at a favorable depth for light or nutrient acquisition. GvpA forms the protein shell. It is not clear what function gas vesicles perform in soil bacteria. The protein is Gas vesicle protein A of Streptomyces sp. (strain CB03234).